The following is a 362-amino-acid chain: Bifunctional chorismate mutase/prephenate dehydratase (362 aa).

The Chorismate mutase domain occupies 1–92 (MEELKELRKE…ACLSLEKKIK (92 aa)). The substrate site is built by arginine 8, arginine 25, lysine 36, and glutamate 49. The region spanning 93–267 (VAYLGPKATF…NFTRFLVIAK (175 aa)) is the Prephenate dehydratase domain. An ACT domain is found at 279 to 356 (SILFGVKDEP…QFLKVLGSYP (78 aa)).

The protein localises to the cytoplasm. It carries out the reaction chorismate = prephenate. The catalysed reaction is prephenate + H(+) = 3-phenylpyruvate + CO2 + H2O. The protein operates within amino-acid biosynthesis; L-phenylalanine biosynthesis; phenylpyruvate from prephenate: step 1/1. Its pathway is metabolic intermediate biosynthesis; prephenate biosynthesis; prephenate from chorismate: step 1/1. In terms of biological role, catalyzes the Claisen rearrangement of chorismate to prephenate and the decarboxylation/dehydration of prephenate to phenylpyruvate. This Aquifex aeolicus (strain VF5) protein is Bifunctional chorismate mutase/prephenate dehydratase (pheA).